Reading from the N-terminus, the 56-residue chain is uncharacterized protein (56 aa).

This is an uncharacterized protein from Homo sapiens (Human).